The chain runs to 330 residues: Putative heme-binding peroxidase (330 aa).

Residue histidine 38 is the Proton acceptor of the active site. Heme b is bound at residue histidine 162. Catalysis depends on tryptophan 178, which acts as the Tryptophan radical intermediate. Residues glycine 286–leucine 330 form a disordered region.

This sequence belongs to the peroxidase family. Cytochrome c peroxidase subfamily. Heme b is required as a cofactor.

In terms of biological role, destroys radicals which are normally produced within the cells and which are toxic to biological systems. The sequence is that of Putative heme-binding peroxidase (CCP2) from Mycosarcoma maydis (Corn smut fungus).